Here is a 176-residue protein sequence, read N- to C-terminus: Tubulin polymerization-promoting protein family member 3 (176 aa).

Alanine 2 carries the N-acetylalanine modification.

The protein belongs to the TPPP family.

Its subcellular location is the cytoplasm. It is found in the cytoskeleton. Its function is as follows. Regulator of microtubule dynamic that has microtubule bundling activity. Required for embryo implantation; possibly by regulating beta-catenin. Also required for decidualization via regulation of beta-catenin. The protein is Tubulin polymerization-promoting protein family member 3 (Tppp3) of Rattus norvegicus (Rat).